The primary structure comprises 314 residues: Ribosomal protein L11 methyltransferase (314 aa).

S-adenosyl-L-methionine contacts are provided by T163, G184, D206, and N248.

This sequence belongs to the methyltransferase superfamily. PrmA family.

The protein localises to the cytoplasm. The enzyme catalyses L-lysyl-[protein] + 3 S-adenosyl-L-methionine = N(6),N(6),N(6)-trimethyl-L-lysyl-[protein] + 3 S-adenosyl-L-homocysteine + 3 H(+). In terms of biological role, methylates ribosomal protein L11. This is Ribosomal protein L11 methyltransferase from Lactobacillus delbrueckii subsp. bulgaricus (strain ATCC BAA-365 / Lb-18).